The primary structure comprises 288 residues: Serine/threonine-protein acetyltransferase YopJ (288 aa).

Active-site residues include histidine 109 and glutamate 128. Residue histidine 109 participates in CoA binding. 167–168 serves as a coordination point for CoA; it reads RS. Cysteine 172 is a catalytic residue. Residues 182–185 and 224–225 each bind 1D-myo-inositol hexakisphosphate; these read KLYI and KH. Position 227–230 (227–230) interacts with CoA; it reads QGKK. Residue arginine 257 coordinates 1D-myo-inositol hexakisphosphate. 266-270 lines the CoA pocket; the sequence is DGKEL.

The protein belongs to the acetyltransferase YopJ family. It depends on 1D-myo-inositol hexakisphosphate as a cofactor.

It localises to the secreted. It catalyses the reaction L-threonyl-[protein] + acetyl-CoA = O-acetyl-L-threonyl-[protein] + CoA. It carries out the reaction L-seryl-[protein] + acetyl-CoA = O-acetyl-L-seryl-[protein] + CoA. With respect to regulation, 1D-myo-inositol hexakisphosphate activates protein-acetyltransferase activity via an allosteric mechanism: 1D-myo-inositol hexakisphosphate-binding induces a conformational rearrangement that stimulates the interaction with acetyl-CoA. In terms of biological role, serine/threonine-protein acetyltransferase translocated into infected cells, which inhibits the host immune response and induces cell death by mediating acetylation of target proteins. Inhibits the MAPK and NF-kappa-B signaling pathways by acetylating protein-kinases such as MAP2K1, MAP2K6, MAP3K7/TAK1 and I-kappa-B kinase (CHUK/IKKA and IKBKB) on serine and threonine residues critical for their activation by phosphorylation, thereby preventing protein-kinase activation. Promotes pyroptosis, a programmed cell death, in host cells by mediating acetylation of MAP3K7/TAK1: MAP3K7/TAK1 inactivation triggers activation of caspase-8 (CASP8), followed by CASP8-dependent cleavage of gasdermin-D (GSDMD) and induction of pyroptosis. Also able to induce intestinal barrier dysfunction by acetylating and inhibiting host protein-kinases RIPK2/RICK and MAP3K7/TAK1, thereby promoting cell death. This is Serine/threonine-protein acetyltransferase YopJ from Yersinia pseudotuberculosis serotype I (strain IP32953).